Consider the following 678-residue polypeptide: UvrABC system protein B (678 aa).

In terms of domain architecture, Helicase ATP-binding spans 35–422 (EGVSDGLMFQ…ADNVVEQVVR (388 aa)). ATP is bound at residue 48-55 (GVTGSGKT). Residues 101 to 124 (YYDYYQPEAYVPTRDLFIEKDSSI) carry the Beta-hairpin motif. Positions 439-605 (QVDDLLGEIH…GVSKAVRELI (167 aa)) constitute a Helicase C-terminal domain. The 36-residue stretch at 633–668 (AREIRRLEKLMMDHARNLEFEQAAAARDALNALKSR) folds into the UVR domain.

It belongs to the UvrB family. Forms a heterotetramer with UvrA during the search for lesions. Interacts with UvrC in an incision complex.

It is found in the cytoplasm. Functionally, the UvrABC repair system catalyzes the recognition and processing of DNA lesions. A damage recognition complex composed of 2 UvrA and 2 UvrB subunits scans DNA for abnormalities. Upon binding of the UvrA(2)B(2) complex to a putative damaged site, the DNA wraps around one UvrB monomer. DNA wrap is dependent on ATP binding by UvrB and probably causes local melting of the DNA helix, facilitating insertion of UvrB beta-hairpin between the DNA strands. Then UvrB probes one DNA strand for the presence of a lesion. If a lesion is found the UvrA subunits dissociate and the UvrB-DNA preincision complex is formed. This complex is subsequently bound by UvrC and the second UvrB is released. If no lesion is found, the DNA wraps around the other UvrB subunit that will check the other stand for damage. This chain is UvrABC system protein B, found in Bordetella pertussis (strain Tohama I / ATCC BAA-589 / NCTC 13251).